Reading from the N-terminus, the 265-residue chain is Thiamine thiazole synthase (265 aa).

NAD(+) contacts are provided by residues Ala-43, 62 to 63, Gly-70, Val-134, and 162 to 164; these read ER and HVD. The Fe cation site is built by Asp-164 and His-179. Met-229 contacts NAD(+). Arg-239 serves as a coordination point for glycine.

It belongs to the THI4 family. As to quaternary structure, homooctamer; tetramer of dimers. Fe(2+) serves as cofactor.

The enzyme catalyses hydrogen sulfide + glycine + NAD(+) = ADP-5-ethyl-4-methylthiazole-2-carboxylate + nicotinamide + 3 H2O + H(+). The protein operates within cofactor biosynthesis; thiamine diphosphate biosynthesis. Its function is as follows. Involved in the biosynthesis of the thiazole moiety of thiamine. Catalyzes the conversion of NAD and glycine to adenosine diphosphate 5-(2-hydroxyethyl)-4-methylthiazole-2-carboxylate (ADT), an adenylated thiazole intermediate, using free sulfide as a source of sulfur. In Sulfolobus acidocaldarius (strain ATCC 33909 / DSM 639 / JCM 8929 / NBRC 15157 / NCIMB 11770), this protein is Thiamine thiazole synthase.